A 373-amino-acid polypeptide reads, in one-letter code: Integrator complex subunit 15 (373 aa).

It belongs to the Integrator subunit 15 family. Belongs to the multiprotein complex Integrator, at least composed of IntS1, IntS2, IntS3, IntS4, omd/IntS5, IntS6, defl/IntS7, IntS8, IntS9, IntS10, IntS11, IntS12, asun/IntS13, IntS14 and IntS15. The core complex associates with protein phosphatase 2A subunits mts/PP2A and Pp2A-29B, to form the Integrator-PP2A (INTAC) complex.

It localises to the nucleus. Its function is as follows. Component of the integrator complex, a multiprotein complex that terminates RNA polymerase II (Pol II) transcription in the promoter-proximal region of genes. The integrator complex provides a quality checkpoint during transcription elongation by driving premature transcription termination of transcripts that are unfavorably configured for transcriptional elongation: the complex terminates transcription by (1) catalyzing dephosphorylation of the C-terminal domain (CTD) of Pol II subunit Rbp1 and Spt5, and (2) degrading the exiting nascent RNA transcript via endonuclease activity. The integrator complex is also involved in the 3'-end processing of the U7 snRNA, and also the spliceosomal snRNAs U1, U2, U4 and U5. The sequence is that of Integrator complex subunit 15 from Drosophila melanogaster (Fruit fly).